Consider the following 267-residue polypeptide: MRSQLLFSTHRLARCFGHRCSIFATTSHENALISTQKSIISMQTRAIHLTSFKFIRARHTDDKQEKNQNEGEDNQKGENKTTDQQDGPKKIDPSVIRKLRIYVLAVAGLSFVTSFIMLSQMFTGDRNSADGLTNEDFTRPGIPMKTFIDKYLKHGEVQRIVFVPNNSRAIAILHRGAVIDGKAASEASVIVEYPQNAQQFWADVRRAEGEIGIGLTEGVQIDLYQGMTTVKMIQLIIGVVILAWLGTQYGRLLRKRLLENQAKKGKN.

Positions 58–90 (RHTDDKQEKNQNEGEDNQKGENKTTDQQDGPKK) are disordered. A run of 2 helical transmembrane segments spans residues 101–121 (IYVL…LSQM) and 226–246 (GMTT…AWLG).

It localises to the membrane. This is an uncharacterized protein from Caenorhabditis elegans.